The following is a 397-amino-acid chain: Lysophospholipid transporter LplT (397 aa).

Transmembrane regions (helical) follow at residues 21–41, 53–73, 91–111, 139–159, 164–184, 229–249, 257–277, 281–301, 304–324, 344–364, and 372–392; these read SAQFLSAFGDNALLFATLALL, ILQMVFVGAYILFAPFVGQVA, LGAASICFGFNPFIGYTLVGI, LMESSTIAAILLGSVAGGVLA, LAALGICAVVYAGAVVANLFI, WGAGVTLRFLLVLWVPTALGI, YLNAMVAVGIVVGAGAAAKLV, TVRRCMPAGILIGVGVLFFSL, ALLPAYGLLILIGILGGFFIV, IAVQNLGENTAMLLMLGLYSL, and VVGIGVGFGALFALAITGLWI.

It belongs to the major facilitator superfamily. LplT (TC 2.A.1.42) family.

Its subcellular location is the cell inner membrane. In terms of biological role, catalyzes the facilitated diffusion of 2-acyl-glycero-3-phosphoethanolamine (2-acyl-GPE) into the cell. The sequence is that of Lysophospholipid transporter LplT from Enterobacter sp. (strain 638).